Here is a 501-residue protein sequence, read N- to C-terminus: Glycerol kinase (501 aa).

Thr17 contributes to the ADP binding site. The ATP site is built by Thr17, Thr18, and Ser19. Thr17 lines the sn-glycerol 3-phosphate pocket. Arg21 lines the ADP pocket. Residues Arg87, Glu88, Tyr139, and Asp243 each contribute to the sn-glycerol 3-phosphate site. Glycerol contacts are provided by Arg87, Glu88, Tyr139, Asp243, and Gln244. Positions 265 and 308 each coordinate ADP. ATP is bound by residues Thr265, Gly308, Gln312, and Gly409. Residues Gly409 and Asn413 each contribute to the ADP site.

This sequence belongs to the FGGY kinase family.

The catalysed reaction is glycerol + ATP = sn-glycerol 3-phosphate + ADP + H(+). Its pathway is polyol metabolism; glycerol degradation via glycerol kinase pathway; sn-glycerol 3-phosphate from glycerol: step 1/1. With respect to regulation, inhibited by fructose 1,6-bisphosphate (FBP). Its function is as follows. Key enzyme in the regulation of glycerol uptake and metabolism. Catalyzes the phosphorylation of glycerol to yield sn-glycerol 3-phosphate. In Pseudomonas syringae pv. syringae (strain B728a), this protein is Glycerol kinase.